We begin with the raw amino-acid sequence, 264 residues long: Catenin delta-2 (264 aa).

4 ARM repeats span residues 20-59 (NKIK…NLVY), 64-104 (DDNK…NLSS), 120-162 (LTNA…NVSS), and 166-211 (EARR…NLSY). The disordered stretch occupies residues 238-264 (GKDAESSGCWGKKKKKKKSQDQWDGVG).

It belongs to the beta-catenin family. As to quaternary structure, binds to E-cadherin at a juxtamembrane site within the cytoplasmic domain. Binds to PSEN1. Interacts with ZBTB33. Interacts with ARHGEF28. Interacts (via the extreme C-terminus) with FRMPD2 (via the PDZ 2 domain). Interacts with PDZD2. Interacts with CDK5. Interacts with CTNBB1. Interacts with GSK3A and GSK3B. Interacts with DNM2. Interacts with CCDC85B. Post-translationally, O-glycosylated. Phosphorylated by CDK5. Phosphorylated by GSK3B. In terms of tissue distribution, predominantly expressed in brain; accumulates in cortical neurons (at protein level).

It is found in the nucleus. The protein resides in the cell junction. The protein localises to the adherens junction. It localises to the cell projection. Its subcellular location is the dendrite. It is found in the perikaryon. Functionally, has a critical role in neuronal development, particularly in the formation and/or maintenance of dendritic spines and synapses. Involved in the regulation of canonical Wnt signaling. It probably acts on beta-catenin turnover, facilitating beta-catenin interaction with GSK3B, phosphorylation, ubiquitination and degradation. May be involved in neuronal cell adhesion and tissue morphogenesis and integrity by regulating adhesion molecules. Functions as a transcriptional activator when bound to ZBTB33. The polypeptide is Catenin delta-2 (Ctnnd2) (Rattus norvegicus (Rat)).